Here is a 704-residue protein sequence, read N- to C-terminus: Tryptophan synthase (704 aa).

Residues 1–292 are tryptophan synthase alpha chain; that stretch reads MEAIKKVFEQ…QLTPNAETAK (292 aa). Catalysis depends on proton acceptor residues Glu-49 and Asp-60. The interval 293–704 is tryptophan synthase beta chain; that stretch reads GVENILPARF…HVSSNAIPSK (412 aa). An N6-(pyridoxal phosphate)lysine modification is found at Lys-380.

The protein in the N-terminal section; belongs to the TrpA family. This sequence in the C-terminal section; belongs to the TrpB family. Pyridoxal 5'-phosphate serves as cofactor.

The enzyme catalyses (1S,2R)-1-C-(indol-3-yl)glycerol 3-phosphate + L-serine = D-glyceraldehyde 3-phosphate + L-tryptophan + H2O. Its pathway is amino-acid biosynthesis; L-tryptophan biosynthesis; L-tryptophan from chorismate: step 5/5. The polypeptide is Tryptophan synthase (TRP-1) (Coprinopsis cinerea (strain Okayama-7 / 130 / ATCC MYA-4618 / FGSC 9003) (Inky cap fungus)).